The following is a 448-amino-acid chain: tRNA(Ile)-lysidine synthase (448 aa).

25-30 (SGGSDS) is a binding site for ATP.

This sequence belongs to the tRNA(Ile)-lysidine synthase family.

It is found in the cytoplasm. It catalyses the reaction cytidine(34) in tRNA(Ile2) + L-lysine + ATP = lysidine(34) in tRNA(Ile2) + AMP + diphosphate + H(+). Its function is as follows. Ligates lysine onto the cytidine present at position 34 of the AUA codon-specific tRNA(Ile) that contains the anticodon CAU, in an ATP-dependent manner. Cytidine is converted to lysidine, thus changing the amino acid specificity of the tRNA from methionine to isoleucine. In Brucella suis biovar 1 (strain 1330), this protein is tRNA(Ile)-lysidine synthase.